The primary structure comprises 104 residues: N(2)-fixation sustaining protein CowN (104 aa).

It belongs to the CowN family.

In terms of biological role, is required to sustain N(2)-dependent growth in the presence of low levels of carbon monoxide (CO). Probably acts by protecting the N(2) fixation ability of the nitrogenase complex, which is inactivated in the presence of CO. In Arcobacter nitrofigilis (strain ATCC 33309 / DSM 7299 / CCUG 15893 / LMG 7604 / NCTC 12251 / CI) (Campylobacter nitrofigilis), this protein is N(2)-fixation sustaining protein CowN.